The chain runs to 160 residues: MSTLKKPDLSDPKLRAKLAKGMGHNYYGEPAWPNDLLYIFPVVILGTIACVVGLAVLDPAMLGDKANPFATPLEILPEWYLYPVFQILRVVPNKLLGIALQTLIPLGLMILPFIENVNKFSNPFRRPVAMSVFLFGTFLTIYLGIGACLPIDKSLTLGLF.

3 helical membrane-spanning segments follow: residues 36 to 56, 95 to 115, and 131 to 151; these read LLYIFPVVILGTIACVVGLAV, LLGIALQTLIPLGLMILPFIE, and SVFLFGTFLTIYLGIGACLPI.

This sequence belongs to the cytochrome b family. PetD subfamily. As to quaternary structure, the 4 large subunits of the cytochrome b6-f complex are cytochrome b6, subunit IV (17 kDa polypeptide, PetD), cytochrome f and the Rieske protein, while the 4 small subunits are PetG, PetL, PetM and PetN. The complex functions as a dimer.

Its subcellular location is the cellular thylakoid membrane. In terms of biological role, component of the cytochrome b6-f complex, which mediates electron transfer between photosystem II (PSII) and photosystem I (PSI), cyclic electron flow around PSI, and state transitions. The protein is Cytochrome b6-f complex subunit 4 of Prochlorococcus marinus subsp. pastoris (strain CCMP1986 / NIES-2087 / MED4).